A 203-amino-acid chain; its full sequence is Endo-type membrane-bound lytic murein transglycosylase A (203 aa).

A signal peptide spans 1–15 (MKLRWFAFLIVLLAG). C16 carries the N-palmitoyl cysteine lipid modification. C16 carries S-diacylglycerol cysteine lipidation.

The protein belongs to the transglycosylase Slt family.

The protein localises to the cell outer membrane. It carries out the reaction Endolytic cleavage of the (1-&gt;4)-beta-glycosidic linkage between N-acetylmuramic acid (MurNAc) and N-acetylglucosamine (GlcNAc) residues in peptidoglycan with concomitant formation of a 1,6-anhydrobond in the MurNAc residue.. Its function is as follows. Murein-degrading enzyme. May play a role in recycling of muropeptides during cell elongation and/or cell division. Preferentially cleaves at a distance of more than two disaccharide units from the ends of the glycan chain. The sequence is that of Endo-type membrane-bound lytic murein transglycosylase A from Escherichia coli O127:H6 (strain E2348/69 / EPEC).